The following is a 258-amino-acid chain: Countin-1 (258 aa).

The first 21 residues, 1–21 (MNKLFSLILALFLVNSAVVSS), serve as a signal peptide directing secretion. One can recognise a Saposin B-type domain in the interval 22–106 (LDSCSICVDF…EKISVCKTND (85 aa)). 3 disulfides stabilise this stretch: Cys-25-Cys-102, Cys-28-Cys-96, and Cys-56-Cys-69. 2 N-linked (GlcNAc...) asparagine glycosylation sites follow: Asn-121 and Asn-215. Residues 233–248 (AGSFSGSSQSTQTGAA) are compositionally biased toward low complexity. The tract at residues 233 to 258 (AGSFSGSSQSTQTGAASGSGSGFALF) is disordered. Positions 249–258 (SGSGSGFALF) are enriched in gly residues.

It belongs to the countin family. As to quaternary structure, component of the counting factor (CF) complex, which includes cf60, cf50, cf45-1 and ctnA.

The protein localises to the secreted. Cell-counting factor that limits the maximum size of the multicellular structure. May down-regulate the expression of gp24, which mediates cell adhesion. In Dictyostelium discoideum (Social amoeba), this protein is Countin-1 (ctnA).